We begin with the raw amino-acid sequence, 502 residues long: 2-isopropylmalate synthase (502 aa).

The Mn(2+) site is built by Asp1, His189, His191, and Asn225. A Pyruvate carboxyltransferase domain is found at 1–254 (DGEQALQASL…STNINYKEIY (254 aa)). The segment at 379–502 (CLKFFSVQSI…VNKKLQELKK (124 aa)) is regulatory domain.

It belongs to the alpha-IPM synthase/homocitrate synthase family. LeuA type 1 subfamily. In terms of assembly, homodimer. Requires Mn(2+) as cofactor.

It is found in the cytoplasm. The catalysed reaction is 3-methyl-2-oxobutanoate + acetyl-CoA + H2O = (2S)-2-isopropylmalate + CoA + H(+). The protein operates within amino-acid biosynthesis; L-leucine biosynthesis; L-leucine from 3-methyl-2-oxobutanoate: step 1/4. Functionally, catalyzes the condensation of the acetyl group of acetyl-CoA with 3-methyl-2-oxobutanoate (2-ketoisovalerate) to form 3-carboxy-3-hydroxy-4-methylpentanoate (2-isopropylmalate). The chain is 2-isopropylmalate synthase from Buchnera aphidicola subsp. Macrosiphoniella ludovicianae.